Here is a 290-residue protein sequence, read N- to C-terminus: Lipoyl synthase (290 aa).

[4Fe-4S] cluster-binding residues include cysteine 34, cysteine 39, cysteine 45, cysteine 60, cysteine 64, cysteine 67, and serine 273. Residues 46–262 (WNKRHATVMI…KYIAYSKGFL (217 aa)) enclose the Radical SAM core domain.

The protein belongs to the radical SAM superfamily. Lipoyl synthase family. [4Fe-4S] cluster is required as a cofactor.

Its subcellular location is the cytoplasm. It catalyses the reaction [[Fe-S] cluster scaffold protein carrying a second [4Fe-4S](2+) cluster] + N(6)-octanoyl-L-lysyl-[protein] + 2 oxidized [2Fe-2S]-[ferredoxin] + 2 S-adenosyl-L-methionine + 4 H(+) = [[Fe-S] cluster scaffold protein] + N(6)-[(R)-dihydrolipoyl]-L-lysyl-[protein] + 4 Fe(3+) + 2 hydrogen sulfide + 2 5'-deoxyadenosine + 2 L-methionine + 2 reduced [2Fe-2S]-[ferredoxin]. It participates in protein modification; protein lipoylation via endogenous pathway; protein N(6)-(lipoyl)lysine from octanoyl-[acyl-carrier-protein]: step 2/2. Catalyzes the radical-mediated insertion of two sulfur atoms into the C-6 and C-8 positions of the octanoyl moiety bound to the lipoyl domains of lipoate-dependent enzymes, thereby converting the octanoylated domains into lipoylated derivatives. The polypeptide is Lipoyl synthase (Wolbachia pipientis subsp. Culex pipiens (strain wPip)).